Consider the following 455-residue polypeptide: Indoleacetamide hydrolase (455 aa).

Active-site charge relay system residues include lysine 71 and serine 146. The active-site Acyl-ester intermediate is the serine 170.

Belongs to the amidase family.

The protein operates within plant hormone metabolism; auxin biosynthesis. In terms of biological role, hydrolyzes indole-3-acetamide (IAM) into indole-3-acetic acid (IAA). This Pseudomonas savastanoi (Pseudomonas syringae pv. savastanoi) protein is Indoleacetamide hydrolase (iaaH).